The primary structure comprises 193 residues: MRTPNILLASQSPRRRELLALLAIPFTAVRVDTPEQFECAASLEENVRRIAEEKAREARRLYPEESSSSIILSADTVVEHDGLILQKPQGEEEALAMLQSLQGRTHSVHTGYALLYGERKHTAMATTRVTFNAMPKREIMRYIATGSPFDKAGAYGIQDPVMASYVSGIEGCYYNVVGLPLSAVWAAIQKMVV.

The Proton acceptor role is filled by aspartate 75.

This sequence belongs to the Maf family. YhdE subfamily. A divalent metal cation is required as a cofactor.

It is found in the cytoplasm. It carries out the reaction dTTP + H2O = dTMP + diphosphate + H(+). The catalysed reaction is UTP + H2O = UMP + diphosphate + H(+). Functionally, nucleoside triphosphate pyrophosphatase that hydrolyzes dTTP and UTP. May have a dual role in cell division arrest and in preventing the incorporation of modified nucleotides into cellular nucleic acids. In Chlorobium luteolum (strain DSM 273 / BCRC 81028 / 2530) (Pelodictyon luteolum), this protein is dTTP/UTP pyrophosphatase.